A 248-amino-acid polypeptide reads, in one-letter code: Acetoacetyl-CoA reductase (248 aa).

Residues 14–16 (GGI), arginine 42, and 90–94 (NAGIT) each bind NADP(+). Substrate contacts are provided by residues aspartate 96 and 149–152 (QFGQ). Tyrosine 155 serves as the catalytic Proton acceptor. NADP(+) is bound at residue 185–188 (PGYT). Substrate contacts are provided by residues 186–187 (GY) and arginine 197.

It belongs to the short-chain dehydrogenases/reductases (SDR) family.

The protein resides in the cytoplasm. It carries out the reaction a (3R)-3-hydroxyacyl-CoA + NADP(+) = a 3-oxoacyl-CoA + NADPH + H(+). The protein operates within biopolymer metabolism; poly-(R)-3-hydroxybutanoate biosynthesis. This chain is Acetoacetyl-CoA reductase (phaB), found in Acinetobacter sp. (strain RA3849).